The sequence spans 305 residues: Ribosomal RNA small subunit methyltransferase H (305 aa).

Residues 33–35, Asp51, Phe82, Asp96, and Gln103 each bind S-adenosyl-L-methionine; that span reads GGY.

It belongs to the methyltransferase superfamily. RsmH family.

Its subcellular location is the cytoplasm. It catalyses the reaction cytidine(1402) in 16S rRNA + S-adenosyl-L-methionine = N(4)-methylcytidine(1402) in 16S rRNA + S-adenosyl-L-homocysteine + H(+). In terms of biological role, specifically methylates the N4 position of cytidine in position 1402 (C1402) of 16S rRNA. This is Ribosomal RNA small subunit methyltransferase H from Rickettsia bellii (strain OSU 85-389).